The chain runs to 224 residues: 3-dehydroquinate dehydratase (224 aa).

3-dehydroquinate contacts are provided by residues 35–37 (EFR) and R65. H120 functions as the Proton donor/acceptor in the catalytic mechanism. K146 functions as the Schiff-base intermediate with substrate in the catalytic mechanism. The 3-dehydroquinate site is built by R183, T202, and Q206.

The protein belongs to the type-I 3-dehydroquinase family. In terms of assembly, homodimer.

The catalysed reaction is 3-dehydroquinate = 3-dehydroshikimate + H2O. Its pathway is metabolic intermediate biosynthesis; chorismate biosynthesis; chorismate from D-erythrose 4-phosphate and phosphoenolpyruvate: step 3/7. Functionally, involved in the third step of the chorismate pathway, which leads to the biosynthesis of aromatic amino acids. Catalyzes the cis-dehydration of 3-dehydroquinate (DHQ) and introduces the first double bond of the aromatic ring to yield 3-dehydroshikimate. This is 3-dehydroquinate dehydratase from Methanobrevibacter smithii (strain ATCC 35061 / DSM 861 / OCM 144 / PS).